Here is a 106-residue protein sequence, read N- to C-terminus: Photosystem II 5 kDa protein, chloroplastic (106 aa).

A chloroplast-targeting transit peptide spans 1-76; that stretch reads MASITMMSSF…ACSVAKTAMA (76 aa). A disulfide bridge links Cys95 with Cys104.

Post-translationally, disulfide bond. As to expression, expressed in midvein, lamina and periphery of leaves (at protein level).

The protein resides in the plastid. It is found in the chloroplast thylakoid membrane. In terms of biological role, may be a component of the oxygen-evolving complex. This chain is Photosystem II 5 kDa protein, chloroplastic, found in Petunia hybrida (Petunia).